We begin with the raw amino-acid sequence, 156 residues long: MPRRRVIGQRKILPDPKFGSELLAKFVNILMVDGKKSTAEAIVYSALETLAQRSGKNELEAFEVALDNVRPTVEVKSRRVGGSTYQVPVEVRPVRRNALAMRWIVEAARKRGDKSMALRLANELTDAADNKGTAVKKREDVHRMAEANKAFAHYRW.

The protein belongs to the universal ribosomal protein uS7 family. In terms of assembly, part of the 30S ribosomal subunit. Contacts proteins S9 and S11.

One of the primary rRNA binding proteins, it binds directly to 16S rRNA where it nucleates assembly of the head domain of the 30S subunit. Is located at the subunit interface close to the decoding center, probably blocks exit of the E-site tRNA. The polypeptide is Small ribosomal subunit protein uS7 (Klebsiella pneumoniae (strain 342)).